The primary structure comprises 485 residues: Probable phosphomannomutase (485 aa).

Ser-86 acts as the Phosphoserine intermediate in catalysis. Residues Ser-86, Asp-236, Asp-238, and Asp-240 each contribute to the Mg(2+) site.

The protein belongs to the phosphohexose mutase family. Mg(2+) serves as cofactor.

The catalysed reaction is alpha-D-mannose 1-phosphate = D-mannose 6-phosphate. The protein is Probable phosphomannomutase of Haemophilus influenzae (strain ATCC 51907 / DSM 11121 / KW20 / Rd).